Consider the following 92-residue polypeptide: Small ribosomal subunit protein uS19 (92 aa).

Belongs to the universal ribosomal protein uS19 family.

Its function is as follows. Protein S19 forms a complex with S13 that binds strongly to the 16S ribosomal RNA. The chain is Small ribosomal subunit protein uS19 from Bacillus cereus (strain B4264).